The sequence spans 932 residues: Protocadherin gamma-A8 (932 aa).

Residues 1–29 (MAAPQSRPRRGELILLCALLGTLWEIGRG) form the signal peptide. 6 consecutive Cadherin domains span residues 30-133 (QIRY…NPKF), 134-242 (QVED…APVF), 243-347 (PHPI…RPEV), 348-452 (IITS…PPTF), 453-562 (PHAS…APEI), and 570-682 (DGST…KPSV). Residues 30-692 (QIRYSVPEET…DPNDSSLTLY (663 aa)) are Extracellular-facing. The N-linked (GlcNAc...) asparagine glycan is linked to asparagine 47. Asparagine 414, asparagine 419, and asparagine 545 each carry an N-linked (GlcNAc...) asparagine glycan. Asparagine 685 carries N-linked (GlcNAc...) asparagine glycosylation. Residues 693–713 (LVVAVAAISCVFLAFVAVLLG) traverse the membrane as a helical segment. The Cytoplasmic portion of the chain corresponds to 714 to 932 (LRLRRWHKSR…KKKSGKKEKK (219 aa)). Disordered stretches follow at residues 804 to 841 (ADHGQQAPPNTDWRFSQAQRPGTSGSQNGDDTGTWPNN) and 902 to 932 (ATLTNAAGKRDGKAPAGGNGNKKKSGKKEKK). Polar residues predominate over residues 810-841 (APPNTDWRFSQAQRPGTSGSQNGDDTGTWPNN). Residues 922–932 (NKKKSGKKEKK) show a composition bias toward basic residues.

The protein resides in the cell membrane. In terms of biological role, potential calcium-dependent cell-adhesion protein. May be involved in the establishment and maintenance of specific neuronal connections in the brain. This chain is Protocadherin gamma-A8 (PCDHGA8), found in Homo sapiens (Human).